The chain runs to 106 residues: UPF0145 protein GSU2791 (106 aa).

The protein belongs to the UPF0145 family.

This chain is UPF0145 protein GSU2791, found in Geobacter sulfurreducens (strain ATCC 51573 / DSM 12127 / PCA).